Reading from the N-terminus, the 574-residue chain is Dihydroxy-acid dehydratase 2 (574 aa).

The interval 1-20 (MNAKTNIKQRLPSRHVTEGP) is disordered. Residue cysteine 56 coordinates [2Fe-2S] cluster. Aspartate 88 serves as a coordination point for Mg(2+). A [2Fe-2S] cluster-binding site is contributed by cysteine 129. The Mg(2+) site is built by aspartate 130 and lysine 131. Lysine 131 is modified (N6-carboxylysine). Cysteine 201 contributes to the [2Fe-2S] cluster binding site. Mg(2+) is bound at residue glutamate 451. Serine 477 serves as the catalytic Proton acceptor.

It belongs to the IlvD/Edd family. In terms of assembly, homodimer. The cofactor is [2Fe-2S] cluster. Mg(2+) is required as a cofactor.

The enzyme catalyses (2R)-2,3-dihydroxy-3-methylbutanoate = 3-methyl-2-oxobutanoate + H2O. The catalysed reaction is (2R,3R)-2,3-dihydroxy-3-methylpentanoate = (S)-3-methyl-2-oxopentanoate + H2O. It participates in amino-acid biosynthesis; L-isoleucine biosynthesis; L-isoleucine from 2-oxobutanoate: step 3/4. Its pathway is amino-acid biosynthesis; L-valine biosynthesis; L-valine from pyruvate: step 3/4. Functionally, functions in the biosynthesis of branched-chain amino acids. Catalyzes the dehydration of (2R,3R)-2,3-dihydroxy-3-methylpentanoate (2,3-dihydroxy-3-methylvalerate) into 2-oxo-3-methylpentanoate (2-oxo-3-methylvalerate) and of (2R)-2,3-dihydroxy-3-methylbutanoate (2,3-dihydroxyisovalerate) into 2-oxo-3-methylbutanoate (2-oxoisovalerate), the penultimate precursor to L-isoleucine and L-valine, respectively. The chain is Dihydroxy-acid dehydratase 2 from Bradyrhizobium diazoefficiens (strain JCM 10833 / BCRC 13528 / IAM 13628 / NBRC 14792 / USDA 110).